Here is a 208-residue protein sequence, read N- to C-terminus: Large ribosomal subunit protein bL25 (208 aa).

This sequence belongs to the bacterial ribosomal protein bL25 family. CTC subfamily. In terms of assembly, part of the 50S ribosomal subunit; part of the 5S rRNA/L5/L18/L25 subcomplex. Contacts the 5S rRNA. Binds to the 5S rRNA independently of L5 and L18.

Functionally, this is one of the proteins that binds to the 5S RNA in the ribosome where it forms part of the central protuberance. The protein is Large ribosomal subunit protein bL25 of Bordetella pertussis (strain Tohama I / ATCC BAA-589 / NCTC 13251).